The following is a 352-amino-acid chain: Putative [LysW]-L-2-aminoadipate/[LysW]-L-glutamate phosphate reductase (352 aa).

Residues 10–13 (SGFT) and 34–36 (SRR) each bind NADP(+). The active site involves Cys151. Asn319 provides a ligand contact to NADP(+).

It belongs to the NAGSA dehydrogenase family. Type 1 subfamily. LysY sub-subfamily.

The protein resides in the cytoplasm. The catalysed reaction is [amino-group carrier protein]-C-terminal-N-(1-carboxy-5-oxopentan-1-yl)-L-glutamine + phosphate + NADP(+) = [amino-group carrier protein]-C-terminal-N-(1-carboxy-5-phosphooxy-5-oxopentan-1-yl)-L-glutamine + NADPH + H(+). It catalyses the reaction [amino-group carrier protein]-C-terminal-gamma-(L-glutamyl-5-semialdehyde)-L-glutamate + phosphate + NADP(+) = [amino-group carrier protein]-C-terminal-gamma-(5-phospho-L-glutamyl)-L-glutamate + NADPH + H(+). Its pathway is amino-acid biosynthesis; L-lysine biosynthesis via AAA pathway; L-lysine from L-alpha-aminoadipate (Thermus route): step 3/5. It participates in amino-acid biosynthesis; L-arginine biosynthesis. In terms of biological role, involved in both the arginine and lysine biosynthetic pathways. This is Putative [LysW]-L-2-aminoadipate/[LysW]-L-glutamate phosphate reductase from Pyrobaculum islandicum (strain DSM 4184 / JCM 9189 / GEO3).